Consider the following 52-residue polypeptide: Defensin D2 (52 aa).

Intrachain disulfides connect Cys8-Cys52, Cys19-Cys39, Cys25-Cys46, and Cys29-Cys48.

In terms of tissue distribution, distributed in the epidermal cell layer of leaves and in the subepidermal layer region of stems. Not in roots.

Its subcellular location is the secreted. It is found in the cell wall. Functionally, antimicrobial peptide. Active against Fusarium spp., Gram-positive and Gram-negative bacterial pathogens. In Spinacia oleracea (Spinach), this protein is Defensin D2.